A 549-amino-acid polypeptide reads, in one-letter code: Glucose-6-phosphate isomerase (549 aa).

Residue Glu353 is the Proton donor of the active site. Active-site residues include His384 and Lys510.

This sequence belongs to the GPI family.

The protein localises to the cytoplasm. It catalyses the reaction alpha-D-glucose 6-phosphate = beta-D-fructose 6-phosphate. It functions in the pathway carbohydrate biosynthesis; gluconeogenesis. It participates in carbohydrate degradation; glycolysis; D-glyceraldehyde 3-phosphate and glycerone phosphate from D-glucose: step 2/4. Its function is as follows. Catalyzes the reversible isomerization of glucose-6-phosphate to fructose-6-phosphate. This Mycolicibacterium smegmatis (Mycobacterium smegmatis) protein is Glucose-6-phosphate isomerase.